We begin with the raw amino-acid sequence, 147 residues long: Cytochrome c-type biogenesis protein CcmE (147 aa).

Over 1 to 7 the chain is Cytoplasmic; the sequence is MKPRHKR. The helical; Signal-anchor for type II membrane protein transmembrane segment at 8–28 threads the bilayer; that stretch reads AAIIAGGLAALGIAAYLVLNA. The Periplasmic segment spans residues 29 to 147; sequence FQSNLVFFFS…QIQKTIKSLK (119 aa). 2 residues coordinate heme: His-121 and Tyr-125.

This sequence belongs to the CcmE/CycJ family.

It is found in the cell inner membrane. Heme chaperone required for the biogenesis of c-type cytochromes. Transiently binds heme delivered by CcmC and transfers the heme to apo-cytochromes in a process facilitated by CcmF and CcmH. The polypeptide is Cytochrome c-type biogenesis protein CcmE (Albidiferax ferrireducens (strain ATCC BAA-621 / DSM 15236 / T118) (Rhodoferax ferrireducens)).